A 403-amino-acid polypeptide reads, in one-letter code: Aromatic-L-amino-acid decarboxylase (403 aa).

Threonine 8 contributes to the substrate binding site. The pyridoxal 5'-phosphate site is built by alanine 74 and serine 75. Histidine 118 is a binding site for substrate. Residue histidine 118 is part of the active site. Pyridoxal 5'-phosphate is bound by residues aspartate 197 and asparagine 226. N6-(pyridoxal phosphate)lysine is present on lysine 229. Residues 250–276 are disordered; the sequence is NAFNVDPLYLKHDMQGSAPDYRHWQIP.

The protein belongs to the group II decarboxylase family. In terms of assembly, homodimer. Pyridoxal 5'-phosphate serves as cofactor.

The enzyme catalyses L-dopa + H(+) = dopamine + CO2. It catalyses the reaction 5-hydroxy-L-tryptophan + H(+) = serotonin + CO2. Functionally, catalyzes the decarboxylation of L-3,4-dihydroxyphenylalanine (L-DOPA) to dopamine and L-5-hydroxytryptophan (5-HTP) to serotonin. Catalyzes the formation of serotonin more efficiently than dopamine. Displays no activity to tyrosine. Variation in the synthesis of bioamines may be a factor contributing to natural variation in life span. The polypeptide is Aromatic-L-amino-acid decarboxylase (Ddc) (Drosophila lebanonensis (Fruit fly)).